The chain runs to 1045 residues: Septation initiation network scaffold protein cdc11 (1045 aa).

Over residues 1-11 (MEQLWLEHDLS) the composition is skewed to basic and acidic residues. Disordered stretches follow at residues 1-269 (MEQL…NTKD) and 282-329 (RGRM…PSLS). The span at 18–39 (PQEQGSDNSSEPPTTSNVNNTQ) shows a compositional bias: polar residues. 3 stretches are compositionally biased toward low complexity: residues 40–52 (STGR…STEH), 96–132 (KQSP…NVSN), and 152–165 (ISSS…SEGS). The segment covering 166–176 (LKSQQSNTRSN) has biased composition (polar residues). The segment covering 187 to 201 (ASNASSSSSVVSSPS) has biased composition (low complexity). 2 stretches are compositionally biased toward polar residues: residues 226–238 (NQLT…NSFE) and 320–329 (DSSNAFPSLS). Serine 360 carries the phosphoserine modification. Positions 377–417 (DVGSSQSSSKTARLNSSPKSTLKTSSVKTRRSHSAQSSRKV) are disordered. Over residues 379 to 403 (GSSQSSSKTARLNSSPKSTLKTSSV) the composition is skewed to polar residues. Serine 558 carries the post-translational modification Phosphoserine. LRR repeat units follow at residues 604 to 625 (RIIQ…SELC), 627 to 646 (SIEE…GCPV), 647 to 668 (TIRD…SNLL), 669 to 690 (NLQY…SSLI), 691 to 712 (HLRE…QHLD), 713 to 734 (GLLK…NSNL), 736 to 757 (RLEE…SSLQ), 758 to 779 (NLMV…QPMI), 780 to 801 (HLRI…QFPH), 802 to 822 (LRTL…RRLK), 846 to 867 (DIRN…HMFL), 868 to 889 (GVRY…IATS), 892 to 913 (NLRV…KPLQ), 914 to 935 (MIHR…CDIL), and 940 to 962 (QLNV…IDDS). The region spanning 1005–1043 (AWRTRRKMYAEAILLACPHLEWLDGSDVSQSSRAAFTKS) is the LRRCT domain.

As to quaternary structure, interacts with sid4. When hyperphosphorylated, interacts with byr4. Also interacts with spg1, sid2, cdc13 and cdc16. Post-translationally, phosphorylated by cdc7 and cdk1. Hyperphosphorylated during anaphase. Dephosphorylated by par1.

Its subcellular location is the cytoplasm. It localises to the cytoskeleton. The protein localises to the microtubule organizing center. It is found in the spindle pole body. Its function is as follows. Essential for the onset of septum formation. Involved in the organization of astral microtubules during mitosis. Acts as a bridge between sid4 and the other SIN proteins mediating their association with the spindle pole body (SPB). The sid4-cdc11 complex organizes a signaling hub on the SPB which coordinates cell and nuclear division. This chain is Septation initiation network scaffold protein cdc11 (cdc11), found in Schizosaccharomyces pombe (strain 972 / ATCC 24843) (Fission yeast).